Reading from the N-terminus, the 307-residue chain is tRNA dimethylallyltransferase (307 aa).

11-18 contributes to the ATP binding site; that stretch reads GPTGSGKT. Residue 13 to 18 participates in substrate binding; the sequence is TGSGKT. The segment at 36 to 39 is interaction with substrate tRNA; sequence DSVA.

Belongs to the IPP transferase family. In terms of assembly, monomer. It depends on Mg(2+) as a cofactor.

The enzyme catalyses adenosine(37) in tRNA + dimethylallyl diphosphate = N(6)-dimethylallyladenosine(37) in tRNA + diphosphate. Catalyzes the transfer of a dimethylallyl group onto the adenine at position 37 in tRNAs that read codons beginning with uridine, leading to the formation of N6-(dimethylallyl)adenosine (i(6)A). This is tRNA dimethylallyltransferase from Koribacter versatilis (strain Ellin345).